The following is a 221-amino-acid chain: GTP-binding nuclear protein Ran-2 (221 aa).

One can recognise a Small GTPase Ran-type domain in the interval 10–174 (DYPSFKLVIV…LYLARKLAGD (165 aa)). A GTP-binding site is contributed by 21–28 (DGGTGKTT). The tract at residues 40-48 (KKYEPTIGV) is switch-I. Residues G71, 125-128 (NKVD), and 153-155 (SAK) contribute to the GTP site. Residues 71-87 (GQEKFGGLRDGYYIHGQ) are switch-II. Low complexity predominate over residues 202–212 (ADLAAAAAQPL). The segment at 202–221 (ADLAAAAAQPLPDDDDDAFE) is disordered.

It belongs to the small GTPase superfamily. Ran family. In terms of assembly, found in a nuclear export complex with RanGTP, exportin and pre-miRNA. Interacts with RanBP1a and RanBP1b. Interacts with PHRIP1. Interacts with KPNB1. Binds to PHIP1.

The protein resides in the nucleus. It localises to the nucleus envelope. GTP-binding protein involved in nucleocytoplasmic transport. Required for the import of protein into the nucleus and also for RNA export. Involved in chromatin condensation and control of cell cycle. The chain is GTP-binding nuclear protein Ran-2 from Arabidopsis thaliana (Mouse-ear cress).